The sequence spans 152 residues: Protein SprT-like (152 aa).

The 146-residue stretch at 6–151 (LQQLVCRISL…SKCLGKLELL (146 aa)) folds into the SprT-like domain. Histidine 67 provides a ligand contact to Zn(2+). Glutamate 68 is an active-site residue. A Zn(2+)-binding site is contributed by histidine 71.

It belongs to the SprT family. Requires Zn(2+) as cofactor.

The protein localises to the cytoplasm. The polypeptide is Protein SprT-like (Lysinibacillus sphaericus (strain C3-41)).